The primary structure comprises 344 residues: S-adenosylmethionine:tRNA ribosyltransferase-isomerase (344 aa).

Belongs to the QueA family. As to quaternary structure, monomer.

It is found in the cytoplasm. It catalyses the reaction 7-aminomethyl-7-carbaguanosine(34) in tRNA + S-adenosyl-L-methionine = epoxyqueuosine(34) in tRNA + adenine + L-methionine + 2 H(+). The protein operates within tRNA modification; tRNA-queuosine biosynthesis. Transfers and isomerizes the ribose moiety from AdoMet to the 7-aminomethyl group of 7-deazaguanine (preQ1-tRNA) to give epoxyqueuosine (oQ-tRNA). The chain is S-adenosylmethionine:tRNA ribosyltransferase-isomerase from Acinetobacter baylyi (strain ATCC 33305 / BD413 / ADP1).